The primary structure comprises 352 residues: Protein Wnt-2 (352 aa).

An N-terminal signal peptide occupies residues 1–23 (MWKIHNKLLIYILWIMEIRLVSS). 11 cysteine pairs are disulfide-bonded: Cys65-Cys76, Cys115-Cys123, Cys125-Cys148, Cys196-Cys210, Cys198-Cys205, Cys281-Cys312, Cys297-Cys307, Cys311-Cys351, Cys327-Cys342, Cys329-Cys339, and Cys334-Cys335. Residues Asn75 and Asn119 are each glycosylated (N-linked (GlcNAc...) asparagine). A lipid anchor (O-palmitoleoyl serine; by PORCN) is attached at Ser202.

This sequence belongs to the Wnt family. Post-translationally, palmitoleoylated by porcupine. The lipid group functions as a sorting signal, targeting the ligand to polarized vesicles that transport Wnt2 to unique sites at the cell surface. Depalmitoleoylated by notum, leading to inhibit Wnt signaling pathway. As to expression, dynamic expression pattern during embryogenesis. Expression is predominantly segmented, with expression also seen in the limb primordia and presumptive gonads. In embryonic tracheal cells, expression is close to and dorsal to the tracheal placode.

The protein localises to the secreted. The protein resides in the extracellular space. It is found in the extracellular matrix. Binds as a ligand to a family of frizzled seven-transmembrane receptors and acts through a cascade of genes on the nucleus. Segment polarity protein. May function in gonadogenesis and limb development. Wg and Wnt2 have a role in the developing trachea and together are responsible for all dorsal trunk formation. This is Protein Wnt-2 (Wnt2) from Drosophila melanogaster (Fruit fly).